The sequence spans 463 residues: ATP-dependent protease ATPase subunit HslU (463 aa).

ATP-binding positions include Ile19 and 61–66 (GVGKTE). The tract at residues 154-174 (FGGAQNSSQTSDTQEDGEIEK) is disordered. Positions 277, 341, and 413 each coordinate ATP.

It belongs to the ClpX chaperone family. HslU subfamily. As to quaternary structure, a double ring-shaped homohexamer of HslV is capped on each side by a ring-shaped HslU homohexamer. The assembly of the HslU/HslV complex is dependent on binding of ATP.

The protein resides in the cytoplasm. Its function is as follows. ATPase subunit of a proteasome-like degradation complex; this subunit has chaperone activity. The binding of ATP and its subsequent hydrolysis by HslU are essential for unfolding of protein substrates subsequently hydrolyzed by HslV. HslU recognizes the N-terminal part of its protein substrates and unfolds these before they are guided to HslV for hydrolysis. In Bacillus cereus (strain G9842), this protein is ATP-dependent protease ATPase subunit HslU.